The chain runs to 358 residues: Peptide chain release factor 1 (358 aa).

The residue at position 235 (Q235) is an N5-methylglutamine.

It belongs to the prokaryotic/mitochondrial release factor family. Methylated by PrmC. Methylation increases the termination efficiency of RF1.

It localises to the cytoplasm. In terms of biological role, peptide chain release factor 1 directs the termination of translation in response to the peptide chain termination codons UAG and UAA. This Neisseria gonorrhoeae (strain NCCP11945) protein is Peptide chain release factor 1.